Here is a 375-residue protein sequence, read N- to C-terminus: MQCALYDAGRCRSCQWITQPIPEQLSAKTADLKNLLADFPVEEWCAPVSGPEQGFRNKAKMVVSGSVEKPLLGMLHRDGTPEDLCDCPLYPASFAPVFAALKPFIARAGLTPYNVARKRGELKYILLTESQSDGGMMLRFVLRSETKLAQLRKALPWLQEQLPQLKVITVNIQPVHMAIMEGETEIYLTEQQALAERFNDVPLWIRPQSFFQTNPAVASQLYATARDWVRQLPVKHMWDLFCGVGGFGLHCATPDMQLTGIEIAPEAIACAKQSAAELGLTRLQFQALDSTQFATAQGEVPELVLVNPPRRGIGKPLCDYLSTMAPRFIIYSSCNAQTMAKDIRELPGFRIERVQLFDMFPHTAHYEVLTLLVKQ.

4 residues coordinate [4Fe-4S] cluster: C3, C11, C14, and C87. S-adenosyl-L-methionine is bound by residues Q212, F241, E262, and N307. Catalysis depends on C334, which acts as the Nucleophile.

Belongs to the class I-like SAM-binding methyltransferase superfamily. RNA M5U methyltransferase family. RlmC subfamily.

The catalysed reaction is uridine(747) in 23S rRNA + S-adenosyl-L-methionine = 5-methyluridine(747) in 23S rRNA + S-adenosyl-L-homocysteine + H(+). Its function is as follows. Catalyzes the formation of 5-methyl-uridine at position 747 (m5U747) in 23S rRNA. The polypeptide is 23S rRNA (uracil(747)-C(5))-methyltransferase RlmC (Shigella boydii serotype 4 (strain Sb227)).